A 383-amino-acid chain; its full sequence is Putative transcription factor 282R (383 aa).

Belongs to the IIV-6 282R family.

In terms of biological role, transcription activation. This chain is Putative transcription factor 282R, found in Acheta domesticus (House cricket).